Reading from the N-terminus, the 540-residue chain is Acyl-CoA synthetase 7 (540 aa).

ATP contacts are provided by residues 186-194 (SSGTTGKPK), Asp-415, Arg-430, and Lys-522. The Microbody targeting signal motif lies at 538-540 (AKL).

This sequence belongs to the ATP-dependent AMP-binding enzyme family. As to expression, expressed in intestine.

It is found in the peroxisome. It carries out the reaction nonanoate + ATP + CoA = nonanoyl-CoA + AMP + diphosphate. It catalyses the reaction IC-asc-C7 + ATP + CoA = IC-asc-C7-CoA + AMP + diphosphate. The catalysed reaction is IC-asc-C9 + ATP + CoA = IC-asc-C9-CoA + AMP + diphosphate. Functionally, plays a role in ascaroside pheromones biosynthesis, which regulates development and behavior. Specifically, activates the side chain of medium-chain indol-3-carbonyl (IC)-ascarosides for shortening through beta-oxidation. Converts IC-asc-C7 and IC-asc-C9 into IC-asc-C7-CoA and IC-asc-C9-CoA, respectively. May play a role in fatty-acid metabolism by activating and converting nonanoate (C9) into nonanoyl-CoA (C9-CoA). The sequence is that of Acyl-CoA synthetase 7 from Caenorhabditis elegans.